Here is a 422-residue protein sequence, read N- to C-terminus: Regulator of sigma-W protease RasP (422 aa).

4 consecutive transmembrane segments (helical) span residues 6 to 26, 175 to 195, 346 to 366, and 394 to 414; these read VIAF…GHLL, IAAG…MLGL, IVNL…VNLL, and EAFV…VVTW. His20 lines the Zn(2+) pocket. The active site involves Glu21. His24 is a binding site for Zn(2+). One can recognise a PDZ domain in the interval 186-271; sequence AYVILVMLGL…TLHISVTPEA (86 aa).

This sequence belongs to the peptidase M50B family. The cofactor is Zn(2+).

It localises to the cell membrane. In terms of biological role, is responsible for site-2 cleavage of the RsiW anti-sigma factor. This results, after a third proteolytic step catalyzed by the ClpXP protease, in the release of SigW and the transcription activation of the genes under the control of the sigma-W factor. Can also cleave liberated signal peptides of PenP and Mpr, probably within in the cell membrane. The chain is Regulator of sigma-W protease RasP from Bacillus subtilis (strain 168).